Reading from the N-terminus, the 602-residue chain is ATP-dependent DNA helicase II subunit 1 (602 aa).

Residues 268–483 (FQCPLILDEK…YDNMKKVTQS (216 aa)) enclose the Ku domain. A phosphoserine mark is found at serine 370, serine 371, and serine 372.

It belongs to the ku70 family. In terms of assembly, heterodimer of YKU70/HDF1 and YKU80/HDF2. Sumoylated by MMS21.

Its subcellular location is the nucleus. The protein resides in the chromosome. The protein localises to the telomere. It catalyses the reaction ATP + H2O = ADP + phosphate + H(+). Single-stranded DNA-dependent ATP-dependent helicase. Involved in non-homologous end joining (NHEJ) DNA double strand break repair. DNA-binding is sequence-independent but has a high affinity to nicks in double-stranded DNA and to the ends of duplex DNA. Binds to naturally occurring chromosomal ends, and therefore provides chromosomal end protection. Appears to have a role in recruitment of telomerase and CDC13 to the telomere and the subsequent telomere elongation. Required also for telomere recombination to repair telomeric ends in the absence of telomerase. KU70, of the KU70/KU80 heterodimer, binds to the stem loop of TLC1, the RNA component of telomerase. Involved in telomere maintenance. Interacts with telomeric repeats and subtelomeric sequences thereby controlling telomere length and protecting against subtelomeric rearrangement. Maintains telomeric chromatin, which is involved in silencing the expression of genes located at the telomere. Required for mating-type switching. This Saccharomyces cerevisiae (strain ATCC 204508 / S288c) (Baker's yeast) protein is ATP-dependent DNA helicase II subunit 1 (YKU70).